We begin with the raw amino-acid sequence, 558 residues long: MPSRRAARESAPELGALGSSDLSSLSLTVSRTTDELEIIDEYIKENGFGLDGTQLSEMPRLVPRGPASLSSVTLGPAAPPPPATPSWSCTLGRLVSPGPCPRPYLVITEQPKQRGMRFRYECEGRSAGSILGESSTEASKTLPAIELRDCGGLREVEVTACLVWKDWPHRVHPHSLVGKDCTDGVCRVRLRPHVSPRHSFNNLGIQCVRKKEIEAAIERKIQLGIDPYNAGSLKNHQEVDMNVVRICFQASYRDQQGHLHRMDPILSEPVYDKKSTNTSELRICRINKESGPCTGGEELYLLCDKVQKEDISVVFSTASWEGRADFSQADVHRQIAIVFKTPPYEDLEISEPVTVNVFLQRLTDGVCSEPLPFTYLPRDHDSYGVDKKRKRGLPDVLGELSSSDPHGIESKRRKKKPVFLDHFLPGHSSGLFLPPSALQPADSDFFPASISLPGLEPPGGPDLLDDGFAYDPSAPTLFTMLDLLPPAPPLASAVVGSGGAGATVVESSGPEPLSLDSFAAPGPGDVGTASLVGSNMFPNQYREAAFGGGLLSPGPEAT.

The span at 1 to 11 (MPSRRAARESA) shows a compositional bias: basic and acidic residues. A disordered region spans residues 1–21 (MPSRRAARESAPELGALGSSD). Residue S19 is modified to Phosphoserine. The tract at residues 22-50 (LSSLSLTVSRTTDELEIIDEYIKENGFGL) is leucine-zipper. T84 carries the phosphothreonine modification. The RHD domain maps to 103–418 (PYLVITEQPK…ESKRRKKKPV (316 aa)). Short sequence motifs (nuclear localization signal) lie at residues 387–391 (KKRKR) and 411–416 (KRRKKK). S552 bears the Phosphoserine mark.

As to quaternary structure, component of the NF-kappa-B RelB-p50 complex. Component of the NF-kappa-B RelB-p52 complex. Self-associates; the interaction seems to be transient and may prevent degradation allowing for heterodimer formation p50 or p52. Interacts with NFKB1/p50, NFKB2/p52 and NFKB2/p100. Interacts with NFKBID. Interacts with BMAL1 and the interaction is enhanced in the presence of CLOCK. Phosphorylation at 'Thr-103' and 'Ser-573' is followed by proteasomal degradation. In terms of tissue distribution, expressed in intestine, thymus and spleen. Undetectable in liver, bome marrow, kidney and testis.

It localises to the nucleus. It is found in the cytoplasm. Its subcellular location is the cytoskeleton. The protein localises to the microtubule organizing center. The protein resides in the centrosome. NF-kappa-B is a pleiotropic transcription factor which is present in almost all cell types and is involved in many biological processed such as inflammation, immunity, differentiation, cell growth, tumorigenesis and apoptosis. NF-kappa-B is a homo- or heterodimeric complex formed by the Rel-like domain-containing proteins RELA/p65, RELB, NFKB1/p105, NFKB1/p50, REL and NFKB2/p52. The dimers bind at kappa-B sites in the DNA of their target genes and the individual dimers have distinct preferences for different kappa-B sites that they can bind with distinguishable affinity and specificity. Different dimer combinations act as transcriptional activators or repressors, respectively. NF-kappa-B is controlled by various mechanisms of post-translational modification and subcellular compartmentalization as well as by interactions with other cofactors or corepressors. NF-kappa-B complexes are held in the cytoplasm in an inactive state complexed with members of the NF-kappa-B inhibitor (I-kappa-B) family. In a conventional activation pathway, I-kappa-B is phosphorylated by I-kappa-B kinases (IKKs) in response to different activators, subsequently degraded thus liberating the active NF-kappa-B complex which translocates to the nucleus. NF-kappa-B heterodimeric RelB-p50 and RelB-p52 complexes are transcriptional activators. RELB neither associates with DNA nor with RELA/p65 or REL. Stimulates promoter activity in the presence of NFKB2/p49. As a member of the NUPR1/RELB/IER3 survival pathway, may allow the development of pancreatic intraepithelial neoplasias. Regulates the circadian clock by repressing the transcriptional activator activity of the CLOCK-BMAL1 heterodimer in a CRY1/CRY2 independent manner. Increased repression of the heterodimer is seen in the presence of NFKB2/p52. Is required for both T and B lymphocyte maturation and function. In Mus musculus (Mouse), this protein is Transcription factor RelB (Relb).